The sequence spans 141 residues: Large ribosomal subunit protein uL11 (141 aa).

The protein belongs to the universal ribosomal protein uL11 family. As to quaternary structure, part of the ribosomal stalk of the 50S ribosomal subunit. Interacts with L10 and the large rRNA to form the base of the stalk. L10 forms an elongated spine to which L12 dimers bind in a sequential fashion forming a multimeric L10(L12)X complex. One or more lysine residues are methylated.

Its function is as follows. Forms part of the ribosomal stalk which helps the ribosome interact with GTP-bound translation factors. In Exiguobacterium sibiricum (strain DSM 17290 / CCUG 55495 / CIP 109462 / JCM 13490 / 255-15), this protein is Large ribosomal subunit protein uL11.